Here is a 382-residue protein sequence, read N- to C-terminus: V-set and immunoglobulin domain-containing protein 1 (382 aa).

The signal sequence occupies residues 1 to 21 (MGLTFWKVFLILNCLAGQVNG). The region spanning 22-133 (VQVTIPDSFV…FFGKNQGTIS (112 aa)) is the Ig-like V-type domain. Topologically, residues 22–234 (VQVTIPDSFV…DLTTPYPGIG (213 aa)) are extracellular. An N-linked (GlcNAc...) asparagine glycan is attached at asparagine 32. Disulfide bonds link cysteine 43–cysteine 116 and cysteine 161–cysteine 211. Residues 140-227 (PSKPFCSIQG…GNSSCEIDLT (88 aa)) enclose the Ig-like C2-type domain. Residues asparagine 200 and asparagine 219 are each glycosylated (N-linked (GlcNAc...) asparagine). A helical membrane pass occupies residues 235-255 (IIVGAFVGTLIGVIIIISVVW). Topologically, residues 256-382 (FVRRKVKAKG…FCDEEKVIKP (127 aa)) are cytoplasmic. The segment at 266–382 (KERKRNSKTT…FCDEEKVIKP (117 aa)) is disordered. Residues 273–285 (KTTTELEPMTKIN) are compositionally biased toward polar residues. Basic and acidic residues predominate over residues 286–298 (QRTEGETMPREDA). Over residues 327-341 (EPEPALQPTVEPPSG) the composition is skewed to pro residues.

Its subcellular location is the membrane. This is V-set and immunoglobulin domain-containing protein 1 (VSIG1) from Bos taurus (Bovine).